We begin with the raw amino-acid sequence, 137 residues long: Small ribosomal subunit protein uS11 (137 aa).

Residues 1 to 10 (MPPKSRSTGP) show a composition bias toward polar residues. 2 disordered regions span residues 1-27 (MPPKSRSTGPKKTQKTRRRDKKNIPHG) and 116-137 (GTISDVTPQPHNGCRPPKRRRV). Positions 12-21 (KTQKTRRRDK) are enriched in basic residues.

It belongs to the universal ribosomal protein uS11 family. Part of the 30S ribosomal subunit. Interacts with proteins S7 and S18. Binds to IF-3.

Located on the platform of the 30S subunit, it bridges several disparate RNA helices of the 16S rRNA. Forms part of the Shine-Dalgarno cleft in the 70S ribosome. The sequence is that of Small ribosomal subunit protein uS11 from Rhodococcus erythropolis (strain PR4 / NBRC 100887).